Reading from the N-terminus, the 341-residue chain is Follistatin (341 aa).

The signal sequence occupies residues 1–29 (MLNERIQPGMIFLLTVSLCHFMEYRAVQA). A TB domain is found at 30–103 (GNCWLQQSKN…TCENVDCGPG (74 aa)). Cystine bridges form between cysteine 32–cysteine 55, cysteine 42–cysteine 88, cysteine 56–cysteine 91, cysteine 95–cysteine 106, cysteine 100–cysteine 116, cysteine 118–cysteine 150, cysteine 122–cysteine 143, and cysteine 132–cysteine 164. Residue asparagine 72 is glycosylated (N-linked (GlcNAc...) asparagine). A Follistatin-like 1 domain is found at 94–117 (TCENVDCGPGKKCKMNKKNKPRCV). 3 consecutive Kazal-like domains span residues 100–166 (CGPG…KCKK), 186–241 (NAYC…KCIK), and 264–318 (RGRC…SCNS). N-linked (GlcNAc...) asparagine glycosylation occurs at asparagine 124. In terms of domain architecture, Follistatin-like 2 spans 167-190 (TCRDVLCPGSSSCVVDQTNNAYCV). Cystine bridges form between cysteine 192/cysteine 225, cysteine 196/cysteine 218, and cysteine 207/cysteine 239. Residues 244 to 268 (SCEDIQCSAGKKCLWDSRVGRGRCA) enclose the Follistatin-like 3 domain. Intrachain disulfides connect cysteine 270-cysteine 302, cysteine 274-cysteine 295, and cysteine 284-cysteine 316. Asparagine 288 carries N-linked (GlcNAc...) asparagine glycosylation. Residues 321 to 333 (EDTEEEEEEEEPD) are compositionally biased toward acidic residues. The tract at residues 321–341 (EDTEEEEEEEEPDYSFVISSW) is disordered.

Monomer. In terms of tissue distribution, spemann organizer and notochord.

It is found in the secreted. Its function is as follows. Binds directly to activin and functions as an activin antagonist which plays a role in neural induction. The short isoform is a more potent inhibitor of activin than the long isoform. Specific inhibitor of the biosynthesis and secretion of pituitary follicle stimulating hormone (FSH). The protein is Follistatin (fst) of Xenopus laevis (African clawed frog).